Reading from the N-terminus, the 273-residue chain is Putative pyruvate, phosphate dikinase regulatory protein (273 aa).

153-160 contributes to the ADP binding site; that stretch reads GISRTSKT.

It belongs to the pyruvate, phosphate/water dikinase regulatory protein family. PDRP subfamily.

The catalysed reaction is N(tele)-phospho-L-histidyl/L-threonyl-[pyruvate, phosphate dikinase] + ADP = N(tele)-phospho-L-histidyl/O-phospho-L-threonyl-[pyruvate, phosphate dikinase] + AMP + H(+). It carries out the reaction N(tele)-phospho-L-histidyl/O-phospho-L-threonyl-[pyruvate, phosphate dikinase] + phosphate + H(+) = N(tele)-phospho-L-histidyl/L-threonyl-[pyruvate, phosphate dikinase] + diphosphate. Its function is as follows. Bifunctional serine/threonine kinase and phosphorylase involved in the regulation of the pyruvate, phosphate dikinase (PPDK) by catalyzing its phosphorylation/dephosphorylation. This chain is Putative pyruvate, phosphate dikinase regulatory protein, found in Rhizobium johnstonii (strain DSM 114642 / LMG 32736 / 3841) (Rhizobium leguminosarum bv. viciae).